A 522-amino-acid polypeptide reads, in one-letter code: 4-chlorobenzoate--CoA ligase (522 aa).

Residues threonine 161 to lysine 169, aspartate 300 to threonine 305, and asparagine 410 each bind ATP.

It belongs to the ATP-dependent AMP-binding enzyme family. In terms of assembly, homodimer. Mg(2+) is required as a cofactor.

The catalysed reaction is 4-chlorobenzoate + ATP + CoA = 4-chlorobenzoyl-CoA + AMP + diphosphate. It participates in xenobiotic degradation; 4-chlorobenzoate degradation; 4-hydroxybenzoate from 4-chlorobenzoate: step 2/3. Catalyzes the formation of chlorobenzoyl-CoA via a 2 step reaction. First 4-chlorobenzoate is adenylated by ATP, followed by acyl transfer from the 4-chlorobenzoyl-AMP intermediate to CoA. Benzoate, 4-bromobenzoate, 4-iodobenzoate and 4-fluorobenzoate also act as substrates. Inactive towards 4-nitrobenzoate. This is 4-chlorobenzoate--CoA ligase from Arthrobacter sp.